A 317-amino-acid chain; its full sequence is MYNYLDFEKPVADLEGQILELKKLAQEQGSVEMGDEISRLEKRSADALKDIYRKLTPWQKAQIARHPDRPHCLEYIDRLFTEFTPLAGDRKFANDEALQAGFGRFNGTPVAIIGQEKGSDTKTRLKHNFGSARPEGYRKAVRIMEMADRFQLPLITFVDTAGAYPGVSAEERGQAEAIARSTAECLKLRVPVISIIIGEGGSGGAIAIAVANRVYMLEHSIYSVISPEGAASILWHDSTRAKDAASNMRITAQDLFDLKIIDGIIPEPLGGAHRGKESVIDAAGDIIAASLRSMKDIDGETLKQERRQKFLEIGRNI.

Positions 40–293 constitute a CoA carboxyltransferase C-terminal domain; the sequence is LEKRSADALK…GDIIAASLRS (254 aa).

The protein belongs to the AccA family. Acetyl-CoA carboxylase is a heterohexamer composed of biotin carboxyl carrier protein (AccB), biotin carboxylase (AccC) and two subunits each of ACCase subunit alpha (AccA) and ACCase subunit beta (AccD).

Its subcellular location is the cytoplasm. The catalysed reaction is N(6)-carboxybiotinyl-L-lysyl-[protein] + acetyl-CoA = N(6)-biotinyl-L-lysyl-[protein] + malonyl-CoA. It participates in lipid metabolism; malonyl-CoA biosynthesis; malonyl-CoA from acetyl-CoA: step 1/1. Its function is as follows. Component of the acetyl coenzyme A carboxylase (ACC) complex. First, biotin carboxylase catalyzes the carboxylation of biotin on its carrier protein (BCCP) and then the CO(2) group is transferred by the carboxyltransferase to acetyl-CoA to form malonyl-CoA. The sequence is that of Acetyl-coenzyme A carboxylase carboxyl transferase subunit alpha from Brucella abortus (strain S19).